The chain runs to 494 residues: MGRKKKKQLKPWCWYCNRDFDDEKILTQHQKAKHFKCHICHKKLYTGPGLAIHCMQVHKETIDAVPNAIPGRTDIELEIYGMEGIPEKDMDEGRRLLEQKTQESQKKKQQDDSDEYDDDDSAASTSFQPQPVQPQQGYIPPMAQPGLPPVPGAPGMPPGIPPLMPGVPPLMPGMPPVMPGMPPGLHHQRKYTQSFCGENIMMPMGGMMPPGPGIPPLMPGMPPGMPPPVPRPGIPPMTQAQAVSAPGILNRPPAPTATVPAPQPPVTKPLFPSAGQMGTPVTSSSTASSNSESLSASSKAPFPSTAQAQVAVQGPVGTDFKPLNSTPATSTEPPKPTFPAYTQSTASTTSTTNSTAAKPAASITSKPATLTTTSATSKLIHPDEDISLEERRAQLPKYQRNLPRPGQAPIGNPPVGPIGGMMPPQPGIPQQQGMRPPMPPHGQYGGHHQGMPGYLPGAMPPYGQGPPMVPPYQGGPPRPPMGMRPPVMSQGGRY.

The segment at 1–92 is microtubule-binding region; sequence MGRKKKKQLK…EGIPEKDMDE (92 aa). 2 C2H2-type zinc fingers span residues 11 to 34 and 35 to 58; these read PWCW…KAKH and FKCH…MQVH. Positions 100-111 are enriched in basic and acidic residues; that stretch reads KTQESQKKKQQD. Disordered regions lie at residues 100 to 161, 250 to 377, and 455 to 494; these read KTQE…PGIP, NRPP…SATS, and LPGA…GGRY. The span at 112–121 shows a compositional bias: acidic residues; it reads DSDEYDDDDS. Positions 127-136 are enriched in polar residues; sequence FQPQPVQPQQ. The segment covering 142 to 161 has biased composition (pro residues); the sequence is MAQPGLPPVPGAPGMPPGIP. A compositionally biased stretch (low complexity) spans 283 to 300; it reads SSSTASSNSESLSASSKA. Over residues 323 to 332 the composition is skewed to polar residues; the sequence is LNSTPATSTE. The span at 342–377 shows a compositional bias: low complexity; it reads TQSTASTTSTTNSTAAKPAASITSKPATLTTTSATS. Residues 375-407 form a GLEBS region; that stretch reads ATSKLIHPDEDISLEERRAQLPKYQRNLPRPGQ. Over residues 463 to 483 the composition is skewed to pro residues; that stretch reads GQGPPMVPPYQGGPPRPPMGM.

As to quaternary structure, interacts (via GLEBS region) with BUB3.

The protein localises to the nucleus. The protein resides in the chromosome. It is found in the centromere. It localises to the kinetochore. Its subcellular location is the cytoplasm. The protein localises to the cytoskeleton. The protein resides in the spindle. Functionally, kinetochore- and microtubule-binding protein that plays a key role in spindle assembly. ZNF207/BuGZ is mainly composed of disordered low-complexity regions and undergoes phase transition or coacervation to form temperature-dependent liquid droplets. Coacervation promotes microtubule bundling and concentrates tubulin, promoting microtubule polymerization and assembly of spindle and spindle matrix by concentrating its building blocks. Also acts as a regulator of mitotic chromosome alignment by mediating the stability and kinetochore loading of BUB3. Mechanisms by which BUB3 is protected are unclear: according to a first report, ZNF207/BuGZ may act by blocking ubiquitination and proteasomal degradation of BUB3. According to another report, the stabilization is independent of the proteasome. This Pongo abelii (Sumatran orangutan) protein is BUB3-interacting and GLEBS motif-containing protein ZNF207.